The chain runs to 135 residues: DNA-directed RNA polymerase subunit omega (135 aa).

The protein belongs to the RNA polymerase subunit omega family. As to quaternary structure, the RNAP catalytic core consists of 2 alpha, 1 beta, 1 beta' and 1 omega subunit. When a sigma factor is associated with the core the holoenzyme is formed, which can initiate transcription.

The catalysed reaction is RNA(n) + a ribonucleoside 5'-triphosphate = RNA(n+1) + diphosphate. Promotes RNA polymerase assembly. Latches the N- and C-terminal regions of the beta' subunit thereby facilitating its interaction with the beta and alpha subunits. The polypeptide is DNA-directed RNA polymerase subunit omega (Rhizobium meliloti (strain 1021) (Ensifer meliloti)).